Consider the following 380-residue polypeptide: Probable pectin lyase A (380 aa).

The first 20 residues, 1-20 (MRYTSLFTAVTAALASTAAA), serve as a signal peptide directing secretion. Disulfide bonds link cysteine 83–cysteine 102 and cysteine 92–cysteine 226. A glycan (N-linked (GlcNAc...) asparagine) is linked at asparagine 129. Arginine 256 is a catalytic residue. A disulfide bond links cysteine 323 and cysteine 331.

This sequence belongs to the polysaccharide lyase 1 family.

The protein localises to the secreted. The catalysed reaction is Eliminative cleavage of (1-&gt;4)-alpha-D-galacturonan methyl ester to give oligosaccharides with 4-deoxy-6-O-methyl-alpha-D-galact-4-enuronosyl groups at their non-reducing ends.. Its function is as follows. Pectinolytic enzymes consist of four classes of enzymes: pectin lyase, polygalacturonase, pectin methylesterase and rhamnogalacturonase. Among pectinolytic enzymes, pectin lyase is the most important in depolymerization of pectin, since it cleaves internal glycosidic bonds of highly methylated pectins. This chain is Probable pectin lyase A (pelA), found in Aspergillus fumigatus (strain ATCC MYA-4609 / CBS 101355 / FGSC A1100 / Af293) (Neosartorya fumigata).